The chain runs to 413 residues: Sulfoquinovose isomerase (413 aa).

Arg-55, Tyr-111, Asn-172, His-176, and Arg-238 together coordinate 6-sulfo-beta-D-quinovose. The Proton donor/acceptor role is filled by His-248. 4 residues coordinate 6-sulfo-beta-D-quinovose: Glu-251, Gln-362, Gln-379, and His-383. His-383 acts as the Proton donor/acceptor in catalysis.

The protein belongs to the N-acylglucosamine 2-epimerase family. In terms of assembly, homohexamer.

It carries out the reaction 6-sulfo-beta-D-quinovose = 6-deoxy-6-sulfo-D-fructose. It catalyses the reaction 6-sulfo-beta-D-quinovose = 6-sulfo-D-rhamnose. Significantly inhibited by Cu(2+), Fe(3+) and Co(2+). Partially inhibited by Mg(2+), Ca(2+) and Mn(2+). Also inhibited by ATP, ADP, dATP, TTP and GTP. Its function is as follows. Catalyzes the isomerization of sulfoquinovose (SQ) to 6-deoxy-6-sulfo-D-fructose (SF). Can also catalyze the interconversion of SQ and sulforhamnose (SR). Has a clear preference for beta-SQ and little-to-no activity on alpha-SQ. In vitro, can also catalyze the interconversion of mannose, fructose and glucose, or lyxose and xylulose, but has extremely low activity with glucose. This Escherichia coli (strain K12) protein is Sulfoquinovose isomerase (yihS).